Here is a 268-residue protein sequence, read N- to C-terminus: Adenosylcobinamide-GDP ribazoletransferase (268 aa).

The next 6 helical transmembrane spans lie at 54 to 74 (IAGL…GVLW), 80 to 100 (AVVL…DGLS), 124 to 144 (IGVM…AFLA), 150 to 170 (WLTA…YGIV), 202 to 222 (ALAL…VWMV), and 243 to 263 (GALC…SAPM).

Belongs to the CobS family. Mg(2+) is required as a cofactor.

The protein localises to the cell membrane. The catalysed reaction is alpha-ribazole + adenosylcob(III)inamide-GDP = adenosylcob(III)alamin + GMP + H(+). It catalyses the reaction alpha-ribazole 5'-phosphate + adenosylcob(III)inamide-GDP = adenosylcob(III)alamin 5'-phosphate + GMP + H(+). It participates in cofactor biosynthesis; adenosylcobalamin biosynthesis; adenosylcobalamin from cob(II)yrinate a,c-diamide: step 7/7. Functionally, joins adenosylcobinamide-GDP and alpha-ribazole to generate adenosylcobalamin (Ado-cobalamin). Also synthesizes adenosylcobalamin 5'-phosphate from adenosylcobinamide-GDP and alpha-ribazole 5'-phosphate. In Roseiflexus sp. (strain RS-1), this protein is Adenosylcobinamide-GDP ribazoletransferase.